A 291-amino-acid polypeptide reads, in one-letter code: Translocon-associated protein subunit alpha (291 aa).

The first 20 residues, 1-20 (MRLLPRLLLLLLLVFPATVL), serve as a signal peptide directing secretion. Over 21–207 (FRGGPRGSLA…EREDGLDGET (187 aa)) the chain is Lumenal. The tract at residues 34 to 83 (DLTEDEETVEDSIIEDEDDEAEVEEDEPTDLVEDKEEEDVSGEPEASPSA) is disordered. Residues 35–75 (LTEDEETVEDSIIEDEDDEAEVEEDEPTDLVEDKEEEDVSG) are compositionally biased toward acidic residues. N-linked (GlcNAc...) asparagine glycans are attached at residues Asn136 and Asn191. A helical transmembrane segment spans residues 208-228 (IFMYMFLAGLGLLVIVGLHQL). Residues 229–291 (LESRKRKRPV…AQKRSVGSDE (63 aa)) lie on the Cytoplasmic side of the membrane. Ser247 bears the Phosphoserine mark. Residue Thr260 is modified to Phosphothreonine. The segment at 263–291 (QIMQSRRDKASPRRLPRKRAQKRSVGSDE) is disordered. The residue at position 273 (Ser273) is a Phosphoserine. A compositionally biased stretch (basic residues) spans 274-284 (PRRLPRKRAQK).

It belongs to the TRAP-alpha family. In terms of assembly, heterotetramer of TRAP-alpha, TRAP-beta, TRAP-delta and TRAP-gamma. Interacts with palmitoylated calnexin (CALX), the interaction is required for efficient folding of glycosylated proteins. Phosphorylated in its cytoplasmic tail.

The protein localises to the endoplasmic reticulum membrane. Its function is as follows. TRAP proteins are part of a complex whose function is to bind calcium to the ER membrane and thereby regulate the retention of ER resident proteins. May be involved in the recycling of the translocation apparatus after completion of the translocation process or may function as a membrane-bound chaperone facilitating folding of translocated proteins. In Pongo abelii (Sumatran orangutan), this protein is Translocon-associated protein subunit alpha (SSR1).